The sequence spans 507 residues: DNA nucleotidylexotransferase (507 aa).

Positions 11 to 17 match the Nuclear localization signal motif; that stretch reads PLRKKAK. The 98-residue stretch at 27-124 folds into the BRCT domain; sequence QHNVKFKEIV…RPVEIQNRHL (98 aa). The segment at 254–258 is involved in DNA binding; it reads VGLKT. Residues 329–334 and 338–341 contribute to the a 2'-deoxyribonucleoside 5'-triphosphate site; these read GFRRGK and HDVD. Asp339, Asp341, and Asp431 together coordinate Mg(2+). An a 2'-deoxyribonucleoside 5'-triphosphate-binding site is contributed by 446 to 447; that stretch reads GW.

It belongs to the DNA polymerase type-X family. Mg(2+) is required as a cofactor. In terms of tissue distribution, found in the thymus and not in the spleen, kidney, intestine, or liver.

The protein resides in the nucleus. It carries out the reaction DNA(n) + a 2'-deoxyribonucleoside 5'-triphosphate = DNA(n+1) + diphosphate. Template-independent DNA polymerase which catalyzes the random addition of deoxynucleoside 5'-triphosphate to the 3'-end of a DNA initiator. One of the in vivo functions of this enzyme is the addition of nucleotides at the junction (N region) of rearranged Ig heavy chain and T-cell receptor gene segments during the maturation of B- and T-cells. In Xenopus laevis (African clawed frog), this protein is DNA nucleotidylexotransferase (dntt).